Here is a 172-residue protein sequence, read N- to C-terminus: Adenine phosphoribosyltransferase (172 aa).

This sequence belongs to the purine/pyrimidine phosphoribosyltransferase family. Homodimer.

The protein localises to the cytoplasm. It carries out the reaction AMP + diphosphate = 5-phospho-alpha-D-ribose 1-diphosphate + adenine. The protein operates within purine metabolism; AMP biosynthesis via salvage pathway; AMP from adenine: step 1/1. Functionally, catalyzes a salvage reaction resulting in the formation of AMP, that is energically less costly than de novo synthesis. The sequence is that of Adenine phosphoribosyltransferase from Staphylococcus saprophyticus subsp. saprophyticus (strain ATCC 15305 / DSM 20229 / NCIMB 8711 / NCTC 7292 / S-41).